A 357-amino-acid polypeptide reads, in one-letter code: DnaJ homolog subfamily C member 25 (357 aa).

The chain crosses the membrane as a helical span at residues 19 to 39 (WLLLAPLLLVPLLVRPAEALV). One can recognise a J domain in the interval 48-121 (DCYEVLGVSR…ETRKDYDYML (74 aa)). 2 helical membrane-spanning segments follow: residues 147–167 (VVIL…WWNS) and 241–261 (LLLF…AWYC).

Belongs to the DNAJC25 family.

It localises to the membrane. The chain is DnaJ homolog subfamily C member 25 (Dnajc25) from Rattus norvegicus (Rat).